The chain runs to 514 residues: ATP synthase subunit alpha (514 aa).

170–177 serves as a coordination point for ATP; that stretch reads GDRQTGKT.

The protein belongs to the ATPase alpha/beta chains family. As to quaternary structure, F-type ATPases have 2 components, CF(1) - the catalytic core - and CF(0) - the membrane proton channel. CF(1) has five subunits: alpha(3), beta(3), gamma(1), delta(1), epsilon(1). CF(0) has three main subunits: a(1), b(2) and c(9-12). The alpha and beta chains form an alternating ring which encloses part of the gamma chain. CF(1) is attached to CF(0) by a central stalk formed by the gamma and epsilon chains, while a peripheral stalk is formed by the delta and b chains.

The protein localises to the cell inner membrane. The catalysed reaction is ATP + H2O + 4 H(+)(in) = ADP + phosphate + 5 H(+)(out). Its function is as follows. Produces ATP from ADP in the presence of a proton gradient across the membrane. The alpha chain is a regulatory subunit. This Psychrobacter cryohalolentis (strain ATCC BAA-1226 / DSM 17306 / VKM B-2378 / K5) protein is ATP synthase subunit alpha.